Reading from the N-terminus, the 196-residue chain is Probable malonic semialdehyde reductase RutE (196 aa).

This sequence belongs to the nitroreductase family. HadB/RutE subfamily. The cofactor is FMN.

The enzyme catalyses 3-hydroxypropanoate + NADP(+) = 3-oxopropanoate + NADPH + H(+). May reduce toxic product malonic semialdehyde to 3-hydroxypropionic acid, which is excreted. In Escherichia coli (strain SMS-3-5 / SECEC), this protein is Probable malonic semialdehyde reductase RutE.